Consider the following 112-residue polypeptide: Nitrogen regulatory protein P-II (112 aa).

Position 51 is an O-UMP-tyrosine (Tyr51).

It belongs to the P(II) protein family. In terms of assembly, homotrimer. In terms of processing, uridylylated/deuridylylated by GlnD.

Its function is as follows. P-II indirectly controls the transcription of the glutamine synthetase gene (GlnA). P-II prevents NR-II-catalyzed conversion of NR-I to NR-I-phosphate, the transcriptional activator of GlnA. When P-II is uridylylated to P-II-UMP, these events are reversed. When the ratio of Gln to 2-ketoglutarate decreases, P-II is uridylylated to P-II-UMP, which causes the deadenylation of glutamine synthetase by GlnE, so activating the enzyme. The protein is Nitrogen regulatory protein P-II (glnB) of Haemophilus influenzae (strain ATCC 51907 / DSM 11121 / KW20 / Rd).